The sequence spans 373 residues: tRNA-specific 2-thiouridylase MnmA (373 aa).

ATP contacts are provided by residues 12-19 (GMSGGVDS) and Met38. The segment at 98–100 (NPD) is interaction with target base in tRNA. Cys103 functions as the Nucleophile in the catalytic mechanism. The cysteines at positions 103 and 200 are disulfide-linked. Residue Gly127 coordinates ATP. The tract at residues 150–152 (KDQ) is interaction with tRNA. Residue Cys200 is the Cysteine persulfide intermediate of the active site. The segment at 312 to 313 (RY) is interaction with tRNA.

Belongs to the MnmA/TRMU family.

The protein resides in the cytoplasm. The enzyme catalyses S-sulfanyl-L-cysteinyl-[protein] + uridine(34) in tRNA + AH2 + ATP = 2-thiouridine(34) in tRNA + L-cysteinyl-[protein] + A + AMP + diphosphate + H(+). In terms of biological role, catalyzes the 2-thiolation of uridine at the wobble position (U34) of tRNA, leading to the formation of s(2)U34. This Streptococcus pneumoniae (strain CGSP14) protein is tRNA-specific 2-thiouridylase MnmA.